A 419-amino-acid polypeptide reads, in one-letter code: GTPase Obg (419 aa).

Residues 1 to 156 enclose the Obg domain; the sequence is MRFVDYVSIE…FYLDLQLKVM (156 aa). Residues 157-334 enclose the OBG-type G domain; that stretch reads ADIGLVGKPN…LGENQKKLEI (178 aa). GTP-binding positions include 163 to 170, 188 to 192, 209 to 212, 278 to 281, and 315 to 317; these read GKPNAGKS, FTTLV, DLPG, NKCD, and NII. Positions 170 and 190 each coordinate Mg(2+). One can recognise an OCT domain in the interval 342–419; it reads IEFNLKAPFL…RIYEFEFHWN (78 aa).

Belongs to the TRAFAC class OBG-HflX-like GTPase superfamily. OBG GTPase family. Monomer. Mg(2+) serves as cofactor.

It is found in the cytoplasm. Functionally, an essential GTPase which binds GTP, GDP and possibly (p)ppGpp with moderate affinity, with high nucleotide exchange rates and a fairly low GTP hydrolysis rate. Plays a role in control of the cell cycle, stress response, ribosome biogenesis and in those bacteria that undergo differentiation, in morphogenesis control. The sequence is that of GTPase Obg from Mesomycoplasma hyopneumoniae (strain 7448) (Mycoplasma hyopneumoniae).